A 59-amino-acid polypeptide reads, in one-letter code: Small ribosomal subunit protein bS21 (59 aa).

Residues 32–42 are compositionally biased toward basic and acidic residues; the sequence is VRKREHYDKPS. Positions 32–59 are disordered; it reads VRKREHYDKPSVKRKKKAEAARRKNAKK. Residues 43-59 are compositionally biased toward basic residues; it reads VKRKKKAEAARRKNAKK.

This sequence belongs to the bacterial ribosomal protein bS21 family.

The polypeptide is Small ribosomal subunit protein bS21 (Clostridioides difficile (strain 630) (Peptoclostridium difficile)).